Here is a 3795-residue protein sequence, read N- to C-terminus: NBPF family member NBPF10 (3795 aa).

Residues 75–119 (RQFKEEKLAEQLKQAEELRQYKVLVHSQERELTQLREKLREGRDA) are a coiled coil. A disordered region spans residues 161–200 (KLSPENDEDEDEDVQVEEAEKVLESSAPREVQKAEESKVP). The segment covering 165 to 177 (ENDEDEDEDVQVE) has biased composition (acidic residues). Residues 165 to 259 (ENDEDEDEDV…ECQDALNILP (95 aa)) form the Olduvai 1 domain. Over residues 190 to 200 (EVQKAEESKVP) the composition is skewed to basic and acidic residues. Residues 346 to 390 (RQFKEEKLAEQLKQAEELRQYKVLVHAQERELTQLKEKLREGRDA) adopt a coiled-coil conformation. Olduvai domains are found at residues 436 to 528 (ENDN…HIIP), 529 to 600 (ENES…VDIG), 601 to 692 (RHRW…PSCP), 695 to 750 (SREL…LDVD), 751 to 843 (RIKK…RSKK), 844 to 936 (ERRR…PSCP), 939 to 994 (SREL…LDVD), 995 to 1087 (RIKK…RSKK), 1088 to 1180 (ERRR…PSCP), 1183 to 1238 (SREL…LDVD), 1239 to 1331 (RIKK…RSKK), 1332 to 1424 (ERRR…PSCP), 1427 to 1482 (SREL…LDVD), 1483 to 1575 (RIKK…RSKK), 1576 to 1668 (ERRR…PSCP), 1671 to 1726 (SREL…LDVD), 1727 to 1819 (RIKK…RSKK), 1820 to 1912 (ERRR…PSCP), 1915 to 1970 (SREL…LDVD), 1971 to 2063 (RIKK…RSKK), 2064 to 2156 (ERRR…PSCP), 2159 to 2214 (SREL…LDVD), 2215 to 2307 (RIKK…RSKK), 2308 to 2400 (ERRR…PSCP), 2403 to 2458 (SREL…LDVD), 2459 to 2551 (RIKK…RSKK), 2552 to 2644 (ERRR…PSCP), 2647 to 2702 (SREL…LDVD), 2703 to 2795 (RIKK…RSKK), 2796 to 2888 (ERRR…PSCP), 2891 to 2946 (SREL…LDVD), 2947 to 3039 (RIKK…RSKK), 3040 to 3132 (ERRR…PSCP), 3135 to 3190 (SREL…LDVD), 3191 to 3283 (RIKK…RSKK), 3284 to 3376 (ERRR…PSCP), 3379 to 3434 (SREL…LDVD), 3435 to 3527 (RIKK…RSKK), 3528 to 3620 (ERRR…PSCP), 3623 to 3696 (SREL…RSKK), and 3697 to 3795 (ERRR…IFPQ). Disordered stretches follow at residues 451 to 475 (EKVQKSSAPREMQKAEEKEVPEDSL) and 520 to 566 (WEDA…EGYS). Composition is skewed to acidic residues over residues 530–539 (NESDDEEEEE) and 550–562 (ESEEEEVPQESWD). Residues 830–868 (KGKGKKRRGRRSKKERRRGRKEGEEDQNPPCPRLSRELL) form a disordered region. Basic residues predominate over residues 831–849 (GKGKKRRGRRSKKERRRGR). A disordered region spans residues 1073–1109 (KKGKGKKRRGRRSKKERRRGRKEGEEDQNPPCPRLSR). The segment covering 1075 to 1093 (GKGKKRRGRRSKKERRRGR) has biased composition (basic residues). Disordered stretches follow at residues 1242 to 1261 (KDEEEEEDQDPPCPRLSREL) and 1318 to 1353 (KGKGKKRRGRRSKKERRRGRKEGEEDQNPPCPRLSR). The span at 1319–1337 (GKGKKRRGRRSKKERRRGR) shows a compositional bias: basic residues. The tract at residues 1562–1600 (KGKGKKRRGRRSKKERRRGRKEGEEDQNPPCPRLSRELL) is disordered. The segment covering 1563 to 1581 (GKGKKRRGRRSKKERRRGR) has biased composition (basic residues). Positions 1806–1844 (KGKGKKRRGRRSKKERRRGRKEGEEDQNPPCPRLSRELL) are disordered. Basic residues predominate over residues 1807-1825 (GKGKKRRGRRSKKERRRGR). The interval 2050-2088 (KGKGKKRRGRRSKKERRRGRKEGEEDQNPPCPRLSRELL) is disordered. Basic residues predominate over residues 2051 to 2069 (GKGKKRRGRRSKKERRRGR). The tract at residues 2294–2332 (KGKGKKRRGRRSKKERRRGRKEGEEDQNPPCPRLSRELL) is disordered. Basic residues predominate over residues 2295–2313 (GKGKKRRGRRSKKERRRGR). Residues 2538–2576 (KGKGKKRRGRRSKKERRRGRKEGEEDQNPPCPRLSRELL) are disordered. Residues 2539 to 2557 (GKGKKRRGRRSKKERRRGR) show a composition bias toward basic residues. Residues 2782 to 2820 (KGKGKKRRGRRSKKERRRGRKEGEEDQNPPCPRLSRELL) form a disordered region. Residues 2783-2801 (GKGKKRRGRRSKKERRRGR) show a composition bias toward basic residues. Residues 3026-3064 (KGKGKKRRGRRSKKERRRGRKEGEEDQNPPCPRLSRELL) form a disordered region. Residues 3027-3045 (GKGKKRRGRRSKKERRRGR) are compositionally biased toward basic residues. Disordered regions lie at residues 3194 to 3213 (KDEEEEEDQDPPCPRLSREL) and 3270 to 3308 (KGKGKKRRGRRSKKERRRGRKEGEEDQNPPCPRLSRELL). The span at 3271–3289 (GKGKKRRGRRSKKERRRGR) shows a compositional bias: basic residues. Disordered stretches follow at residues 3514–3552 (KGKGKKRRGRRSKKERRRGRKEGEEDQNPPCPRLSRELL) and 3684–3716 (GKGKKRRGRRSKKERRRGRKEGEEDQNPPCPRL). Basic residues-rich tracts occupy residues 3515–3533 (GKGKKRRGRRSKKERRRGR) and 3684–3702 (GKGKKRRGRRSKKERRRGR).

Belongs to the NBPF family.

It is found in the cytoplasm. The sequence is that of NBPF family member NBPF10 from Homo sapiens (Human).